A 338-amino-acid chain; its full sequence is Ornithine carbamoyltransferase (338 aa).

N-acetylserine is present on Ser-2. Carbamoyl phosphate contacts are provided by residues 67–70, Arg-118, His-145, and Gln-148; that span reads STRT. Positions 185, 249, 253, and 254 each coordinate L-ornithine. The active-site Proton acceptor is the Cys-289. Residues 289 to 290 and Arg-316 each bind carbamoyl phosphate; that span reads CL.

The protein belongs to the aspartate/ornithine carbamoyltransferase superfamily. OTCase family. As to quaternary structure, interacts with CAR1.

The protein resides in the cytoplasm. It carries out the reaction carbamoyl phosphate + L-ornithine = L-citrulline + phosphate + H(+). Its pathway is amino-acid biosynthesis; L-arginine biosynthesis; L-arginine from L-ornithine and carbamoyl phosphate: step 1/3. With respect to regulation, forms a stable complex with CAR1 in the presence of ornithine and arginine. In this complex CAR1 retains activity, but ARG3 activity is inhibited. In Saccharomyces cerevisiae (strain ATCC 204508 / S288c) (Baker's yeast), this protein is Ornithine carbamoyltransferase (ARG3).